The primary structure comprises 2211 residues: Activating signal cointegrator 1 complex subunit 3 (2211 aa).

The region spanning 495–678 is the Helicase ATP-binding 1 domain; it reads ETAYNTNENM…FLHVNPYIGL (184 aa). Position 508-515 (508-515) interacts with ATP; sequence APTGAGKT. Positions 620–623 match the DEVH box motif; the sequence is DEVH. A Helicase C-terminal 1 domain is found at 717–923; the sequence is VLKQIMAGHQ…GTVTNVEEAV (207 aa). Positions 987–1296 constitute an SEC63 1 domain; it reads STDLGRTASH…GAEAVCIINF (310 aa). The region spanning 1345 to 1520 is the Helicase ATP-binding 2 domain; the sequence is HTLYHTDCNV…WLNINQMGLF (176 aa). 1358-1365 is a binding site for ATP; the sequence is APTGSGKT. The DEIH box signature appears at 1462 to 1465; it reads DEIH. A Helicase C-terminal 2 domain is found at 1553-1760; the sequence is PAFQAIRSHS…GTITSKQDAM (208 aa). In terms of domain architecture, SEC63 2 spans 1821 to 2184; it reads PLTYGRIASY…YLGMDQQYDI (364 aa).

Belongs to the helicase family.

The protein resides in the nucleus. The protein localises to the nucleus speckle. It localises to the cytoplasm. It is found in the cytosol. The enzyme catalyses Couples ATP hydrolysis with the unwinding of duplex DNA by translocating in the 3'-5' direction.. The catalysed reaction is ATP + H2O = ADP + phosphate + H(+). 3'-5' DNA helicase involved in repair of alkylated DNA. Promotes DNA unwinding to generate single-stranded substrate needed for ALKBH3, enabling ALKBH3 to process alkylated N3-methylcytosine (3mC) within double-stranded regions. Also involved in activation of the ribosome quality control (RQC) pathway, a pathway that degrades nascent peptide chains during problematic translation. Drives the splitting of stalled ribosomes. This Gallus gallus (Chicken) protein is Activating signal cointegrator 1 complex subunit 3 (ascc3).